The sequence spans 525 residues: uncharacterized protein (525 aa).

Transmembrane regions (helical) follow at residues 7–29 (FLATHQLLTILIVLASGALLGQI), 34–51 (LRFGAAGALFMGLVVGAL), 64–82 (GLGVVLFCYTVGLAAGSTF), 92–114 (LMLAGVVGLAVMAAAGLGLGRLF), 121–143 (VAGLYAGVLTSPAIDAASMATHG), and 148–170 (LVGYALSYPVGVVVGLIMVAIIA). RCK C-terminal domains are found at residues 178–257 (KDNT…LGHV) and 259–341 (ERTL…LFGD). 5 consecutive transmembrane segments (helical) span residues 351–370 (ALSLGLGAALGLLLGALMVA), 374–396 (GLQFELGTAAGPLVMGMILGSIH), 416–438 (LGLMIFLACVGLASGPAFLSQAV), 443–465 (LAVIAVSAVTLVLGGAIVIAAAW), and 502–524 (SAYGALFALGTVVKILLVQVIVL).

The protein belongs to the AAE transporter (TC 2.A.81) family.

It is found in the cell membrane. This is an uncharacterized protein from Cutibacterium acnes (strain DSM 16379 / KPA171202) (Propionibacterium acnes).